The primary structure comprises 301 residues: Ribonuclease Z (301 aa).

Residues His-63, His-65, Asp-67, His-68, His-141, Asp-204, and His-262 each contribute to the Zn(2+) site. The active-site Proton acceptor is Asp-67.

The protein belongs to the RNase Z family. As to quaternary structure, homodimer. The cofactor is Zn(2+).

It carries out the reaction Endonucleolytic cleavage of RNA, removing extra 3' nucleotides from tRNA precursor, generating 3' termini of tRNAs. A 3'-hydroxy group is left at the tRNA terminus and a 5'-phosphoryl group is left at the trailer molecule.. Functionally, zinc phosphodiesterase, which displays some tRNA 3'-processing endonuclease activity. Probably involved in tRNA maturation, by removing a 3'-trailer from precursor tRNA. This Streptomyces coelicolor (strain ATCC BAA-471 / A3(2) / M145) protein is Ribonuclease Z.